The primary structure comprises 131 residues: Holo-[acyl-carrier-protein] synthase (131 aa).

Asp-8 and Glu-59 together coordinate Mg(2+).

It belongs to the P-Pant transferase superfamily. AcpS family. Mg(2+) is required as a cofactor.

It localises to the cytoplasm. The enzyme catalyses apo-[ACP] + CoA = holo-[ACP] + adenosine 3',5'-bisphosphate + H(+). Its function is as follows. Transfers the 4'-phosphopantetheine moiety from coenzyme A to a Ser of acyl-carrier-protein. The sequence is that of Holo-[acyl-carrier-protein] synthase from Rickettsia conorii (strain ATCC VR-613 / Malish 7).